We begin with the raw amino-acid sequence, 148 residues long: Deoxyuridine 5'-triphosphate nucleotidohydrolase (148 aa).

Substrate-binding positions include 68–70 (RSG), Asn-81, 85–87 (TVD), and Lys-95.

The protein belongs to the dUTPase family. The cofactor is Mg(2+).

The catalysed reaction is dUTP + H2O = dUMP + diphosphate + H(+). Its pathway is pyrimidine metabolism; dUMP biosynthesis; dUMP from dCTP (dUTP route): step 2/2. This enzyme is involved in nucleotide metabolism: it produces dUMP, the immediate precursor of thymidine nucleotides and it decreases the intracellular concentration of dUTP so that uracil cannot be incorporated into DNA. The protein is Deoxyuridine 5'-triphosphate nucleotidohydrolase of Caldanaerobacter subterraneus subsp. tengcongensis (strain DSM 15242 / JCM 11007 / NBRC 100824 / MB4) (Thermoanaerobacter tengcongensis).